The following is a 426-amino-acid chain: 26S proteasome regulatory subunit 7 (426 aa).

ATP is bound at residue 209–216; it reads GPPGTGKT.

The protein belongs to the AAA ATPase family.

The protein localises to the cytoplasm. The protein resides in the nucleus. The 26S proteasome is involved in the ATP-dependent degradation of ubiquitinated proteins. The regulatory (or ATPase) complex confers ATP dependency and substrate specificity to the 26S complex. This chain is 26S proteasome regulatory subunit 7 (RPT1), found in Spinacia oleracea (Spinach).